The sequence spans 354 residues: Methylthioribose-1-phosphate isomerase (354 aa).

Residues 48-50 (RGA), R95, and Q202 each bind substrate. The active-site Proton donor is D243. Substrate is bound at residue 253 to 254 (NK).

This sequence belongs to the eIF-2B alpha/beta/delta subunits family. MtnA subfamily.

It carries out the reaction 5-(methylsulfanyl)-alpha-D-ribose 1-phosphate = 5-(methylsulfanyl)-D-ribulose 1-phosphate. The protein operates within amino-acid biosynthesis; L-methionine biosynthesis via salvage pathway; L-methionine from S-methyl-5-thio-alpha-D-ribose 1-phosphate: step 1/6. Its function is as follows. Catalyzes the interconversion of methylthioribose-1-phosphate (MTR-1-P) into methylthioribulose-1-phosphate (MTRu-1-P). The protein is Methylthioribose-1-phosphate isomerase of Roseiflexus castenholzii (strain DSM 13941 / HLO8).